Consider the following 61-residue polypeptide: Protein MATERNALLY EXPRESSED GENE 6 (61 aa).

C38 and C60 form a disulfide bridge.

This sequence belongs to the MEG family. Ubiquitous.

The polypeptide is Protein MATERNALLY EXPRESSED GENE 6 (MEG6) (Zea mays (Maize)).